Consider the following 361-residue polypeptide: UDP-N-acetylglucosamine--N-acetylmuramyl-(pentapeptide) pyrophosphoryl-undecaprenol N-acetylglucosamine transferase (361 aa).

Residues 11–13 (TGG), Asn124, Arg164, Ser192, and Gln295 each bind UDP-N-acetyl-alpha-D-glucosamine.

The protein belongs to the glycosyltransferase 28 family. MurG subfamily.

The protein resides in the cell membrane. It catalyses the reaction di-trans,octa-cis-undecaprenyl diphospho-N-acetyl-alpha-D-muramoyl-L-alanyl-D-glutamyl-meso-2,6-diaminopimeloyl-D-alanyl-D-alanine + UDP-N-acetyl-alpha-D-glucosamine = di-trans,octa-cis-undecaprenyl diphospho-[N-acetyl-alpha-D-glucosaminyl-(1-&gt;4)]-N-acetyl-alpha-D-muramoyl-L-alanyl-D-glutamyl-meso-2,6-diaminopimeloyl-D-alanyl-D-alanine + UDP + H(+). Its pathway is cell wall biogenesis; peptidoglycan biosynthesis. Its function is as follows. Cell wall formation. Catalyzes the transfer of a GlcNAc subunit on undecaprenyl-pyrophosphoryl-MurNAc-pentapeptide (lipid intermediate I) to form undecaprenyl-pyrophosphoryl-MurNAc-(pentapeptide)GlcNAc (lipid intermediate II). The protein is UDP-N-acetylglucosamine--N-acetylmuramyl-(pentapeptide) pyrophosphoryl-undecaprenol N-acetylglucosamine transferase of Deinococcus geothermalis (strain DSM 11300 / CIP 105573 / AG-3a).